We begin with the raw amino-acid sequence, 1074 residues long: Phospholipase D1 (1074 aa).

The region spanning 81 to 212 is the PX domain; the sequence is VKAQVLEVER…TEFLDVSQLS (132 aa). Positions 219-328 constitute a PH domain; sequence PKGLEGMIMK…WGGAIEEFIQ (110 aa). 2 S-palmitoyl cysteine lipidation sites follow: Cys240 and Cys241. The 28-residue stretch at 459 to 486 folds into the PLD phosphodiesterase 1 domain; the sequence is YLWAHHEKLVIIDQSVAFVGGIDLAYGR. Residues 463 to 928 form a catalytic region; sequence HHEKLVIIDQ…MLGKRDSEMA (466 aa). Ser499, Ser561, and Ser629 each carry phosphoserine. The PLD phosphodiesterase 2 domain maps to 891–918; that stretch reads ELIYVHSKLLIADDNTVIIGSANINDRS.

Belongs to the phospholipase D family. As to quaternary structure, interacts with PIP5K1B. In terms of processing, phosphorylated on serine and threonine residues. It is uncertain whether palmitoylation is on Cys-240 and/or Cys-241. Palmitoylation is required prior to phosphorylation.

The protein localises to the cytoplasm. It localises to the perinuclear region. Its subcellular location is the endoplasmic reticulum membrane. It is found in the golgi apparatus membrane. The protein resides in the late endosome membrane. It catalyses the reaction a 1,2-diacyl-sn-glycero-3-phosphocholine + H2O = a 1,2-diacyl-sn-glycero-3-phosphate + choline + H(+). The catalysed reaction is ethanol + a 1,2-diacyl-sn-glycero-3-phosphocholine = 1,2-diacyl-sn-glycero-3-phosphoethanol + choline. The enzyme catalyses 1,2-dihexadecanoyl-sn-glycero-3-phosphocholine + H2O = 1,2-dihexadecanoyl-sn-glycero-3-phosphate + choline + H(+). With respect to regulation, stimulated by phosphatidylinositol 4,5-bisphosphate and phosphatidylinositol 3,4,5-trisphosphate, activated by the phosphokinase C-alpha, by the ADP-ribosylation factor-1 (ARF-1), and to a lesser extent by GTP-binding proteins: RHO A, RAC-1 and CDC42. Inhibited by oleate. Its function is as follows. Function as phospholipase selective for phosphatidylcholine. Implicated as a critical step in numerous cellular pathways, including signal transduction, membrane trafficking, and the regulation of mitosis. May be involved in the regulation of perinuclear intravesicular membrane traffic. The chain is Phospholipase D1 from Rattus norvegicus (Rat).